The following is a 272-amino-acid chain: Ethanolamine ammonia-lyase small subunit (272 aa).

Positions 161, 182, and 211 each coordinate adenosylcob(III)alamin.

Belongs to the EutC family. As to quaternary structure, the basic unit is a heterodimer which dimerizes to form tetramers. The heterotetramers trimerize; 6 large subunits form a core ring with 6 small subunits projecting outwards. It depends on adenosylcob(III)alamin as a cofactor.

It localises to the bacterial microcompartment. It carries out the reaction ethanolamine = acetaldehyde + NH4(+). It participates in amine and polyamine degradation; ethanolamine degradation. Its function is as follows. Catalyzes the deamination of various vicinal amino-alcohols to oxo compounds. Allows this organism to utilize ethanolamine as the sole source of nitrogen and carbon in the presence of external vitamin B12. This Pseudomonas putida (strain GB-1) protein is Ethanolamine ammonia-lyase small subunit.